Reading from the N-terminus, the 595-residue chain is Elongation factor 4 (595 aa).

Positions 2-183 constitute a tr-type G domain; that stretch reads KNIRNFCIIA…AIVEQVPAPA (182 aa). GTP contacts are provided by residues 14–19 and 130–133; these read DHGKST and NKVD.

The protein belongs to the TRAFAC class translation factor GTPase superfamily. Classic translation factor GTPase family. LepA subfamily.

It is found in the cell inner membrane. It carries out the reaction GTP + H2O = GDP + phosphate + H(+). Required for accurate and efficient protein synthesis under certain stress conditions. May act as a fidelity factor of the translation reaction, by catalyzing a one-codon backward translocation of tRNAs on improperly translocated ribosomes. Back-translocation proceeds from a post-translocation (POST) complex to a pre-translocation (PRE) complex, thus giving elongation factor G a second chance to translocate the tRNAs correctly. Binds to ribosomes in a GTP-dependent manner. In Porphyromonas gingivalis (strain ATCC BAA-308 / W83), this protein is Elongation factor 4.